The sequence spans 353 residues: GTPase Obg (353 aa).

One can recognise an Obg domain in the interval 1-159 (MKFIDEATIK…FELYLELKVL (159 aa)). One can recognise an OBG-type G domain in the interval 160–332 (ADVGLLGMPN…LTYAIMEHVE (173 aa)). GTP contacts are provided by residues 166 to 173 (GMPNAGKS), 191 to 195 (FTTLH), 213 to 216 (DVPG), 284 to 287 (NKVD), and 313 to 315 (SAL). The Mg(2+) site is built by Ser-173 and Thr-193.

Belongs to the TRAFAC class OBG-HflX-like GTPase superfamily. OBG GTPase family. As to quaternary structure, monomer. It depends on Mg(2+) as a cofactor.

It localises to the cytoplasm. An essential GTPase which binds GTP, GDP and possibly (p)ppGpp with moderate affinity, with high nucleotide exchange rates and a fairly low GTP hydrolysis rate. Plays a role in control of the cell cycle, stress response, ribosome biogenesis and in those bacteria that undergo differentiation, in morphogenesis control. This chain is GTPase Obg, found in Methylobacillus flagellatus (strain ATCC 51484 / DSM 6875 / VKM B-1610 / KT).